A 361-amino-acid polypeptide reads, in one-letter code: MIPKEEIMGIFEKYNKDEVTIVTVGSHTSLHILKGAKLEGFSTAVITTKDRAIPYKRFGVADKFIYVDQFSDISKEEIQQQLRDMNAIIVPHGSFIAYCGLDNVEDTFKVPMFGNRAILRWEAERDLEGQLLGGSGLRIPKKYGGPDEIDGPVMVKFPGARGGRGYFPCSSVEEFWRKIDEFKAKGVLTEDDVSKAHIEEYVVGANYCIHYFYSPLKDQVELMGIDRRYESSIDGLVRVPAKDQLELDIDPSYVITGNFPVVIRESLLPQVFDMGDKLVAKAKEEVNPGMLGPFCLQSLCNENLELVVFEMSARVDGGTNTFMNGSPYSCLYTGEPLSMGQRIAKEIKLALELDMIDKVIS.

Positions 27 and 94 each coordinate 5-amino-1-(5-phospho-beta-D-ribosyl)imidazole-4-carboxamide. One can recognise an ATP-grasp domain in the interval 116-348 (RAILRWEAER…MGQRIAKEIK (233 aa)). Residues 146 to 208 (PDEI…ANYC) and Glu-230 contribute to the ATP site. A 5-amino-1-(5-phospho-beta-D-ribosyl)imidazole-4-carboxamide-binding site is contributed by Asn-258. 2 residues coordinate Mg(2+): Gln-297 and Glu-310.

Belongs to the phosphohexose mutase family. Requires Mg(2+) as cofactor. Mn(2+) serves as cofactor.

The catalysed reaction is 5-amino-1-(5-phospho-beta-D-ribosyl)imidazole-4-carboxamide + formate + ATP = 5-formamido-1-(5-phospho-D-ribosyl)imidazole-4-carboxamide + ADP + phosphate. It functions in the pathway purine metabolism; IMP biosynthesis via de novo pathway; 5-formamido-1-(5-phospho-D-ribosyl)imidazole-4-carboxamide from 5-amino-1-(5-phospho-D-ribosyl)imidazole-4-carboxamide (formate route): step 1/1. Catalyzes the ATP- and formate-dependent formylation of 5-aminoimidazole-4-carboxamide-1-beta-d-ribofuranosyl 5'-monophosphate (AICAR) to 5-formaminoimidazole-4-carboxamide-1-beta-d-ribofuranosyl 5'-monophosphate (FAICAR) in the absence of folates. This Methanococcus maripaludis (strain DSM 14266 / JCM 13030 / NBRC 101832 / S2 / LL) protein is 5-formaminoimidazole-4-carboxamide-1-(beta)-D-ribofuranosyl 5'-monophosphate synthetase.